Consider the following 190-residue polypeptide: UPF0316 protein Mboo_0605 (190 aa).

A run of 3 helical transmembrane segments spans residues 3 to 23 (IGTF…RIAE), 41 to 61 (LAAY…GLVL), and 67 to 87 (FWNL…GMEI).

This sequence belongs to the UPF0316 family.

The protein resides in the cell membrane. This chain is UPF0316 protein Mboo_0605, found in Methanoregula boonei (strain DSM 21154 / JCM 14090 / 6A8).